Consider the following 168-residue polypeptide: MRRGLYVGRFQPFHNGHKAVIDGLAEEVDELIIGIGSADISHDIRHPFTAGERVLMITRALNGLKIPFYVIPLEDVKRNALWVAHVKSMVPPFDTVYTSNPLVIQLFKEAGIPVLSPPMYLRESLSGTAVRKKMYHGEAWEEYVPKEVVSVVGEIHGIERMQQISKSD.

It belongs to the archaeal NMN adenylyltransferase family.

Its subcellular location is the cytoplasm. It carries out the reaction beta-nicotinamide D-ribonucleotide + ATP + H(+) = diphosphate + NAD(+). Its pathway is cofactor biosynthesis; NAD(+) biosynthesis; NAD(+) from nicotinamide D-ribonucleotide: step 1/1. In Methanocorpusculum labreanum (strain ATCC 43576 / DSM 4855 / Z), this protein is Nicotinamide-nucleotide adenylyltransferase.